The chain runs to 924 residues: DNA repair and recombination protein RDH54 (924 aa).

Residues 1-10 are compositionally biased toward basic and acidic residues; that stretch reads MQIPKYENKP. Disordered stretches follow at residues 1–21 and 155–182; these read MQIP…GSNK and EALS…KNDG. The span at 168–178 shows a compositional bias: low complexity; that stretch reads TTSTTETVPST. Positions 299 to 487 constitute a Helicase ATP-binding domain; that stretch reads LENDSDISGC…FTIIDFINPG (189 aa). 346–353 provides a ligand contact to ATP; that stretch reads IPLTGLCK. The short motif at 472–475 is the DEGH box element; sequence NDLN. A Glycyl lysine isopeptide (Lys-Gly) (interchain with G-Cter in ubiquitin) cross-link involves residue K615. A Helicase C-terminal domain is found at 631 to 790; sequence KLRVLMTLLE…DSEMRNKESS (160 aa).

It belongs to the SNF2/RAD54 helicase family. In terms of assembly, interacts with RAD51 and DMC1.

The protein resides in the nucleus. The catalysed reaction is ATP + H2O = ADP + phosphate + H(+). Its function is as follows. Involved in the recombinational repair of double-strand breaks (DSB) in DNA during mitosis and meiosis. Has DNA dependent ATPase activity. Promotes D-loop (displacement loop) formation with RAD51 recombinase. Modifies the topology of double-stranded DNA during the D-loop reaction to facilitate the invasion of the homologous duplex molecule by the initiating single-stranded DNA substrate. Required for adaptation from G2/M checkpoint arrest induced by a double strand break, by participating in monitoring the extent of single-stranded DNA produced by resection of DNA ends. This role is distinct from its roles in recombination. Promotes colocalization of RAD51 and DMC1 during meiotic recombination. Involved in crossover interference. This is DNA repair and recombination protein RDH54 (RDH54) from Saccharomyces cerevisiae (strain AWRI1631) (Baker's yeast).